The sequence spans 303 residues: MDNNEKEKSKSELLVVTGLSGAGKSLVIQCLEDMGYFCVDNLPPVLLPKFVELMEQGNPSLRKVAIAIDLRGKELFNSLVAVVDKVKSESDVIIDVMFLEASTEKLISRYKETRRAHPLMEQGKKSLINAINDEREHLSQIRSIANFVIDTTKLSPKELKERIRRYYEDEEFETFTINVTSFGFKHGIQMDADLVFDVRFLPNPYYVVDLRPLTGLDKDVYNYVMKWKETEIFFEKLTDLLDFMIPGYKKEGKSQLVIAIGCTGGQHRSVALAERLGNYLNEVFEYNVYVHHRDAHIESGEKK.

An ATP-binding site is contributed by 18-25 (GLSGAGKS). 69-72 (DLRG) lines the GTP pocket.

The protein belongs to the RapZ-like family.

In terms of biological role, displays ATPase and GTPase activities. The polypeptide is Nucleotide-binding protein SAR0820 (Staphylococcus aureus (strain MRSA252)).